The chain runs to 37 residues: Hemextin B (37 aa).

As to quaternary structure, heterotetramer composed of 2 hemextin A and 2 hemextin B chains; non-covalently linked. Does not exist as a complex in the crude venom. May contain several disulfide bonds. As to expression, expressed by the venom gland.

It is found in the secreted. Hemextin B (monomer): does not show anticoagulant activity. Seems only to synergitically enhance hemextin A activity. Functionally, hemextin AB complex: specifically inhibits the activation of FX (F10) by the TF-FVIIa complex (extrinsic tenase complex (ETC)) (IC(50)= 100 nM, Ki=50 nM) by non-competitively inhibiting the enzymatic activity of FVIIa. The polypeptide is Hemextin B (Hemachatus haemachatus (Rinkhals)).